A 60-amino-acid chain; its full sequence is Homeobox protein engrailed-like (60 aa).

The segment at residues Gly1–Gln41 is a DNA-binding region (homeobox).

This sequence belongs to the engrailed homeobox family.

The protein resides in the nucleus. The protein is Homeobox protein engrailed-like of Lampetra planeri (Brook lamprey).